Reading from the N-terminus, the 238-residue chain is Chloride intracellular channel exl-1 (238 aa).

Belongs to the chloride channel CLIC family. In terms of tissue distribution, expressed in the intestine, neurons and muscles.

Its subcellular location is the cytoplasm. The protein resides in the membrane. It localises to the lysosome membrane. It is found in the golgi apparatus membrane. Probable chloride channel. This chain is Chloride intracellular channel exl-1 (exl-1), found in Caenorhabditis elegans.